The primary structure comprises 395 residues: 1-deoxy-D-xylulose 5-phosphate reductoisomerase (395 aa).

NADPH-binding residues include threonine 10, glycine 11, serine 12, isoleucine 13, arginine 37, glutamine 38, and asparagine 124. 1-deoxy-D-xylulose 5-phosphate is bound at residue lysine 125. Glutamate 126 contributes to the NADPH binding site. Aspartate 150 serves as a coordination point for Mn(2+). Positions 151, 152, 179, and 202 each coordinate 1-deoxy-D-xylulose 5-phosphate. Glutamate 152 is a binding site for Mn(2+). Glycine 208 contacts NADPH. The 1-deoxy-D-xylulose 5-phosphate site is built by serine 215, asparagine 220, lysine 221, and glutamate 224. Glutamate 224 lines the Mn(2+) pocket.

This sequence belongs to the DXR family. The cofactor is Mg(2+). Mn(2+) is required as a cofactor.

The catalysed reaction is 2-C-methyl-D-erythritol 4-phosphate + NADP(+) = 1-deoxy-D-xylulose 5-phosphate + NADPH + H(+). It functions in the pathway isoprenoid biosynthesis; isopentenyl diphosphate biosynthesis via DXP pathway; isopentenyl diphosphate from 1-deoxy-D-xylulose 5-phosphate: step 1/6. Its function is as follows. Catalyzes the NADPH-dependent rearrangement and reduction of 1-deoxy-D-xylulose-5-phosphate (DXP) to 2-C-methyl-D-erythritol 4-phosphate (MEP). This is 1-deoxy-D-xylulose 5-phosphate reductoisomerase from Cupriavidus pinatubonensis (strain JMP 134 / LMG 1197) (Cupriavidus necator (strain JMP 134)).